The chain runs to 247 residues: Carboxy-S-adenosyl-L-methionine synthase (247 aa).

Residues Y40, 65-67, 90-91, 122-123, N137, and R204 contribute to the S-adenosyl-L-methionine site; these read GAS, DN, and DI.

It belongs to the class I-like SAM-binding methyltransferase superfamily. Cx-SAM synthase family. Homodimer.

The catalysed reaction is prephenate + S-adenosyl-L-methionine = carboxy-S-adenosyl-L-methionine + 3-phenylpyruvate + H2O. Functionally, catalyzes the conversion of S-adenosyl-L-methionine (SAM) to carboxy-S-adenosyl-L-methionine (Cx-SAM). The polypeptide is Carboxy-S-adenosyl-L-methionine synthase (Pseudomonas fluorescens (strain Pf0-1)).